The primary structure comprises 351 residues: Tetraacyldisaccharide 4'-kinase (351 aa).

An ATP-binding site is contributed by 61-68 (TAGGTGKT).

Belongs to the LpxK family.

It catalyses the reaction a lipid A disaccharide + ATP = a lipid IVA + ADP + H(+). Its pathway is glycolipid biosynthesis; lipid IV(A) biosynthesis; lipid IV(A) from (3R)-3-hydroxytetradecanoyl-[acyl-carrier-protein] and UDP-N-acetyl-alpha-D-glucosamine: step 6/6. Functionally, transfers the gamma-phosphate of ATP to the 4'-position of a tetraacyldisaccharide 1-phosphate intermediate (termed DS-1-P) to form tetraacyldisaccharide 1,4'-bis-phosphate (lipid IVA). The chain is Tetraacyldisaccharide 4'-kinase from Xanthomonas campestris pv. campestris (strain 8004).